Consider the following 888-residue polypeptide: Glutamate receptor 3 (888 aa).

A signal peptide spans 1 to 22 (MGQSVLRAVFFLVLGLLGHSHG). At 23–546 (GFPNTISIGG…GVFSFLDPLA (524 aa)) the chain is on the extracellular side. N-linked (GlcNAc...) asparagine glycosylation is found at asparagine 57, asparagine 260, asparagine 374, asparagine 409, and asparagine 416. A disulfide bond links cysteine 85 and cysteine 334. L-glutamate contacts are provided by proline 502, threonine 504, and arginine 509. The helical transmembrane segment at 547–567 (YEIWMCIVFAYIGVSVVLFLV) threads the bilayer. The Cytoplasmic portion of the chain corresponds to 568–596 (SRFSPYEWHLEDNNEEPRDPQSPPDPPNE). The helical; Pore-forming intramembrane region spans 597–612 (FGIFNSLWFSLGAFMQ). An intramembrane segment occupies 613–615 (QGC). Cysteine 615 is lipidated: S-palmitoyl cysteine. The Cytoplasmic segment spans residues 616–621 (DISPRS). Residues 622 to 642 (LSGRIVGGVWWFFTLIIISSY) traverse the membrane as a helical segment. Residues 643–817 (TANLAAFLTV…DKTSALSLSN (175 aa)) are Extracellular-facing. Positions 680, 681, and 731 each coordinate L-glutamate. The cysteines at positions 744 and 799 are disulfide-linked. The chain crosses the membrane as a helical span at residues 818-838 (VAGVFYILVGGLGLAMMVALI). Residues 839-888 (EFCYKSRAESKRMKLTKNTQNFKPAPATNTQNYATYREGYNVYGTESVKI) are Cytoplasmic-facing. Residue cysteine 841 is the site of S-palmitoyl cysteine attachment. Tyrosine 871 and tyrosine 881 each carry phosphotyrosine.

It belongs to the glutamate-gated ion channel (TC 1.A.10.1) family. GRIA3 subfamily. Homotetramer or heterotetramer of pore-forming glutamate receptor subunits. Tetramers may be formed by the dimerization of dimers. Interacts with PICK1, GRIP1 and GRIP2. Found in a complex with GRIA1, GRIA2, GRIA4, CNIH2, CNIH3, CACNG2, CACNG3, CACNG4, CACNG5, CACNG7 and CACNG8. Interacts with CACNG5. Found in a complex with GRIA1, GRIA2, GRIA4, DLG4, CACNG8 and CNIH2.

The protein localises to the cell membrane. Its subcellular location is the postsynaptic cell membrane. The protein resides in the postsynaptic density membrane. The catalysed reaction is Ca(2+)(in) = Ca(2+)(out). In terms of biological role, ionotropic glutamate receptor that functions as a ligand-gated cation channel, gated by L-glutamate and glutamatergic agonists such as alpha-amino-3-hydroxy-5-methyl-4-isoxazolepropionic acid (AMPA), quisqualic acid, and kainic acid. L-glutamate acts as an excitatory neurotransmitter at many synapses in the central nervous system and plays an important role in fast excitatory synaptic transmission by inducing long-term potentiation. Binding of the excitatory neurotransmitter L-glutamate induces a conformation change, leading to the opening of the cation channel, and thereby converts the chemical signal to an electrical impulse upon entry of calcium. The receptor then desensitizes rapidly and enters a transient inactive state, characterized by the presence of bound agonist. In the presence of CACNG8, shows resensitization which is characterized by a delayed accumulation of current flux upon continued application of glutamate. The protein is Glutamate receptor 3 of Mus musculus (Mouse).